Here is a 122-residue protein sequence, read N- to C-terminus: Large ribosomal subunit protein uL14c (122 aa).

It belongs to the universal ribosomal protein uL14 family. As to quaternary structure, part of the 50S ribosomal subunit.

Its subcellular location is the plastid. It localises to the chloroplast. Functionally, binds to 23S rRNA. The sequence is that of Large ribosomal subunit protein uL14c from Gnetum parvifolium (Small-leaved jointfir).